The following is a 1088-amino-acid chain: RNA-directed RNA polymerase (1088 aa).

The 187-residue stretch at 501–687 folds into the RdRp catalytic domain; the sequence is LSYGDVTRFL…AKRYIAGGKI (187 aa).

Belongs to the reoviridae RNA-directed RNA polymerase family. Interacts with VP3 (Potential). Interacts with VP2; this interaction activates VP1. Interacts with NSP5; this interaction is probably necessary for the formation of functional virus factories. Interacts with NSP2; this interaction is weak. Mg(2+) is required as a cofactor.

Its subcellular location is the virion. It catalyses the reaction RNA(n) + a ribonucleoside 5'-triphosphate = RNA(n+1) + diphosphate. RNA-directed RNA polymerase that is involved in both transcription and genome replication. Together with VP3 capping enzyme, forms an enzyme complex positioned near the channels situated at each of the five-fold vertices of the core. Following infection, the outermost layer of the virus is lost, leaving a double-layered particle (DLP) made up of the core and VP6 shell. VP1 then catalyzes the transcription of fully conservative plus-strand genomic RNAs that are extruded through the DLP's channels into the cytoplasm where they function as mRNAs for translation of viral proteins. One copy of each of the viral (+)RNAs is also recruited during core assembly, together with newly synthesized polymerase complexes and VP2. The polymerase of these novo-formed particles catalyzes the synthesis of complementary minus-strands leading to dsRNA formation. To do so, the polymerase specifically recognizes and binds 4 bases 5'-UGUG-3' in the conserved 3'-sequence of plus-strand RNA templates. VP2 presumably activates the autoinhibited VP1-RNA complex to coordinate packaging and genome replication. Once dsRNA synthesis is complete, the polymerase switches to the transcriptional mode, thus providing secondary transcription. The chain is RNA-directed RNA polymerase from Homo sapiens (Human).